Consider the following 455-residue polypeptide: Phosphoglucosamine mutase (455 aa).

The active-site Phosphoserine intermediate is S104. Mg(2+) is bound by residues S104, D253, D255, and D257. Phosphoserine is present on S104.

This sequence belongs to the phosphohexose mutase family. Mg(2+) is required as a cofactor. In terms of processing, activated by phosphorylation.

It catalyses the reaction alpha-D-glucosamine 1-phosphate = D-glucosamine 6-phosphate. In terms of biological role, catalyzes the conversion of glucosamine-6-phosphate to glucosamine-1-phosphate. This is Phosphoglucosamine mutase from Psychrobacter arcticus (strain DSM 17307 / VKM B-2377 / 273-4).